The sequence spans 91 residues: Large ribosomal subunit protein eL37 (91 aa).

Zn(2+)-binding residues include cysteine 19, cysteine 22, cysteine 34, and cysteine 37. A C4-type zinc finger spans residues 19-37 (CRRCGKSSFHIQKKTCASC).

Belongs to the eukaryotic ribosomal protein eL37 family. Requires Zn(2+) as cofactor.

Functionally, binds to the 23S rRNA. The polypeptide is Large ribosomal subunit protein eL37 (rpl37) (Dictyostelium discoideum (Social amoeba)).